The sequence spans 126 residues: Prostate and testis expressed protein 1 (126 aa).

A signal peptide spans 1 to 21; the sequence is MDKSLLLELPILLCCFRALSG. Residues 46–125 enclose the UPAR/Ly6 domain; it reads VQCRMCHLQF…CRSHDLCNED (80 aa). 4 disulfide bridges follow: Cys-48–Cys-75, Cys-51–Cys-60, Cys-67–Cys-94, and Cys-98–Cys-115.

The protein belongs to the PATE family. Expressed specifically in prostate cancer, normal prostate, and testis. Expressed in the epithelial cells of the prostate cancer and normal prostate tissues.

It localises to the secreted. The sequence is that of Prostate and testis expressed protein 1 (PATE1) from Homo sapiens (Human).